The sequence spans 163 residues: Phosphopantetheine adenylyltransferase (163 aa).

Residue Ser-9 coordinates substrate. ATP-binding positions include 9 to 10 and His-17; that span reads SF. Residues Lys-41, Ile-75, and Arg-89 each contribute to the substrate site. ATP is bound by residues 90 to 92, Glu-100, and 125 to 131; these read GIR and HLYVRSD.

This sequence belongs to the bacterial CoaD family. Homohexamer. Mg(2+) is required as a cofactor.

The protein resides in the cytoplasm. It catalyses the reaction (R)-4'-phosphopantetheine + ATP + H(+) = 3'-dephospho-CoA + diphosphate. It functions in the pathway cofactor biosynthesis; coenzyme A biosynthesis; CoA from (R)-pantothenate: step 4/5. Functionally, reversibly transfers an adenylyl group from ATP to 4'-phosphopantetheine, yielding dephospho-CoA (dPCoA) and pyrophosphate. This chain is Phosphopantetheine adenylyltransferase, found in Borrelia garinii subsp. bavariensis (strain ATCC BAA-2496 / DSM 23469 / PBi) (Borreliella bavariensis).